A 554-amino-acid chain; its full sequence is (E)-beta-caryophyllene synthase (554 aa).

Mn(2+)-binding residues include Asp313 and Asp317. Residues 313–317 (DDIYD) carry the DDXXD motif motif. Homodimerization regions lie at residues 319–325 (YGTLDEL) and 391–427 (EAQWFFSKYKPTMQEYMKVALLSSGYMMMTINSLAVI). Mn(2+)-binding residues include Asp457 and Glu465.

This sequence belongs to the terpene synthase family. As to quaternary structure, homodimer. The cofactor is Mn(2+). It depends on Mg(2+) as a cofactor. As to expression, expressed in peltate glandular trichomes. Present at low levels in flowers, leaves and stems.

The enzyme catalyses (2E,6E)-farnesyl diphosphate = (-)-(E)-beta-caryophyllene + diphosphate. It carries out the reaction (2E,6E)-farnesyl diphosphate = alpha-humulene + diphosphate. The protein operates within secondary metabolite biosynthesis; terpenoid biosynthesis. Its function is as follows. Involved in the biosynthesis of phenolic sesquiterpenes natural products. Sesquiterpene synthase converting (2E,6E)-farnesyl diphosphate (FPP) to (E)-beta-caryophyllene and alpha-humulene. This is (E)-beta-caryophyllene synthase from Origanum vulgare (Wild marjoram).